Reading from the N-terminus, the 311-residue chain is HTH-type transcriptional regulator PcaQ (311 aa).

An HTH lysR-type domain is found at 6 to 63; that stretch reads IKFRHLQTFVEVARQKSVIRAAEILHVSQPAVTKTIRELEDVLGVSLLEREGRGIRIS. Residues 23–42 constitute a DNA-binding region (H-T-H motif); that stretch reads VIRAAEILHVSQPAVTKTIR.

The protein belongs to the LysR transcriptional regulatory family.

Activates transcription of the pcaDCHGB operon for the catabolism of the phenolic compound protocatechuate. This chain is HTH-type transcriptional regulator PcaQ (pcaQ), found in Agrobacterium fabrum (strain C58 / ATCC 33970) (Agrobacterium tumefaciens (strain C58)).